Here is a 1041-residue protein sequence, read N- to C-terminus: MAAAAAAGAASGLPGPVAQGLKEALVDTLTGILSPVQEVRAAAEEQIKVLEVTEEFGVHLAELTVDPQGALAIRQLASVILKQYVETHWCAQSEKFRPPETTERAKIVIRELLPNGLRESISKVRSSVAYAVSAIAHWDWPEAWPQLFNLLMEMLVSGDLNAVHGAMRVLTEFTREVTDTQMPLVAPVILPEMYKIFTMAEVYGIRTRSRAVEIFTTCAHMICNMEELEKGAAKVLIFPVVQQFTEAFVQALQMPDGPTSDSGFKMEVLKAVTALVKNFPKHMVSSMQQILPIVWNTLTESAAFYVRTEVNYTEEVEDPVDSDGEVLGFENLVFSIFEFVHALLENSKFKSTVKKALPELIYYIILYMQITEEQIKVWTANPQQFVEDEDDDTFSYTVRIAAQDLLLAVATDFQNESAVALATAATRHLQEAEQTKASGTEHWWKIHEACMLALGSVKSIITDSVKNGRIHFDMHGFLTNVILADLNLSASPFLLGRALWAASRFTVAMSPELIQQFLQATVSGLHETQPPSVRISAVRAIWGYCDQLKVSESTHVLQPFLPSILDGLIHLAAQFSSEVLNLVMETLCIVCTVDPEFTASVENKICPFTIAIFLKYSNDPVVASLAQDIFKELSQIEACQGPMQMRLIPTLVSIMQAPADKIPAGLCATAIDILTTVVRNTKPPLSQLLICQAFPAVAQCTLHTDDNATMQNGGECLRAYVSVTLEQVAQWHDEQGHNGLWYVMQVVSQLLDPRTSEFTAAFVGRLVSTLISKAGRELGENLDQILRAILSKMQQAETLSVMQSLIMVFAHLVHTQLEPLLEFLCSLPGPTGKPALEFVMAEWTSRQHLFYGQYEGKVSSVALCKLLQHGINADDKRLQDIRVKGEEIYSMDEGIRTRSKSAKNPERWTNIPLLVKILKLIINELSNVMEANAARQATPAEWNQDDSNDMWEDQEEEEEEEEDGLAGQLLSDILATSKYEEDYYEDDEEDDPDALKDPLYQIDLQAYLTDFLCQFAQQPCYIMFSCHLNDNERRVLQTIGI.

N-acetylalanine is present on alanine 2. Residues 43 to 119 (AEEQIKVLEV…RELLPNGLRE (77 aa)) enclose the Importin N-terminal domain. The segment at 936–967 (QATPAEWNQDDSNDMWEDQEEEEEEEEDGLAG) is disordered. A compositionally biased stretch (acidic residues) spans 943 to 964 (NQDDSNDMWEDQEEEEEEEEDG).

The protein belongs to the importin beta family. In terms of assembly, interacts with histones H2A, H2B, H3 and H4. The binding is coupled to RanGTP cycles. Interacts with AKIRIN2; promoting association with pre-assembled proteasomes. Associates with pre-assembled proteasomes; interaction is indirect and mediated via interaction with AKIRIN2. Interacts with PPP2R1A and PPP2R1B.

The protein localises to the cytoplasm. It localises to the nucleus. Nuclear transport receptor that mediates nuclear import of proteins, such as histones, proteasome and actin. Serves as receptor for nuclear localization signals (NLS) in cargo substrates. Is thought to mediate docking of the importin/substrate complex to the nuclear pore complex (NPC) through binding to nucleoporin and the complex is subsequently translocated through the pore by an energy requiring, Ran-dependent mechanism. At the nucleoplasmic side of the NPC, Ran binds to the importin, the importin/substrate complex dissociates and importin is re-exported from the nucleus to the cytoplasm where GTP hydrolysis releases Ran. The directionality of nuclear import is thought to be conferred by an asymmetric distribution of the GTP- and GDP-bound forms of Ran between the cytoplasm and nucleus. Mediates the import of pre-assembled proteasomes into the nucleus; AKIRIN2 acts as a molecular bridge between IPO9 and the proteasome complex. Mediates the nuclear import of histones H2A, H2B, H4 and H4. In addition to nuclear import, also acts as a chaperone for histones by preventing inappropriate non-nucleosomal interactions. Mediates the nuclear import of actin. The chain is Importin-9 from Mus musculus (Mouse).